Reading from the N-terminus, the 716-residue chain is 1,4-alpha-glucan branching enzyme GlgB (716 aa).

Asp-399 (nucleophile) is an active-site residue. Glu-452 acts as the Proton donor in catalysis.

The protein belongs to the glycosyl hydrolase 13 family. GlgB subfamily. Monomer.

It catalyses the reaction Transfers a segment of a (1-&gt;4)-alpha-D-glucan chain to a primary hydroxy group in a similar glucan chain.. It functions in the pathway glycan biosynthesis; glycogen biosynthesis. In terms of biological role, catalyzes the formation of the alpha-1,6-glucosidic linkages in glycogen by scission of a 1,4-alpha-linked oligosaccharide from growing alpha-1,4-glucan chains and the subsequent attachment of the oligosaccharide to the alpha-1,6 position. In Rhodopseudomonas palustris (strain HaA2), this protein is 1,4-alpha-glucan branching enzyme GlgB.